Reading from the N-terminus, the 457-residue chain is Multidrug resistance protein MdtK (457 aa).

12 helical membrane-spanning segments follow: residues 11 to 31 (LLALGIPVIIAQFSQTAMGVV), 53 to 73 (IWLPTILLGQGILMALTPIVA), 93 to 113 (WLATFLSIMVIAILYNSRFII), 127 to 147 (AIGFIHAIMWGAPGCLYYQVL), 160 to 180 (GMIIGFIGLLINIPVNYAFIY), 188 to 208 (LGGIGCGVATASVFWAMFLMM), 243 to 263 (LPVGLALFFEVTLFAVVALLV), 276 to 296 (IALNFSSLMFMFPLSLGIAAT), 316 to 336 (ITALAVGLMLASCTAIFSIIF), 357 to 377 (LMLFAALYQLSDSVQVIGSGV), 387 to 407 (IFFITFIAYWVIGLPSGYLLG), and 416 to 436 (MGPAGFWIGFILGLTASAIMM).

Belongs to the multi antimicrobial extrusion (MATE) (TC 2.A.66.1) family. MdtK subfamily.

Its subcellular location is the cell inner membrane. Functionally, multidrug efflux pump that functions probably as a Na(+)/drug antiporter. This chain is Multidrug resistance protein MdtK, found in Proteus mirabilis (strain HI4320).